Here is a 986-residue protein sequence, read N- to C-terminus: Ephrin type-A receptor 4 (986 aa).

Positions 1 to 19 (MAGVPVGALLPLLVGVCGA) are cleaved as a signal peptide. The Extracellular segment spans residues 20–547 (VTGSRVYPAN…PIIGDGTNPT (528 aa)). The Eph LBD domain occupies 30 to 209 (EVTLLDSRSV…FYKKCPLTVR (180 aa)). N-linked (GlcNAc...) asparagine glycosylation is found at Asn235, Asn340, and Asn408. Fibronectin type-III domains follow at residues 328–439 (PPSA…TNQA) and 440–537 (APSP…TVPS). Residues 548-569 (VLLVSVAGSVVLVVILIAAFVI) traverse the membrane as a helical segment. Residues 570–986 (SRRRSKYSKA…QQMHGRMVPV (417 aa)) are Cytoplasmic-facing. 2 positions are modified to phosphotyrosine; by autocatalysis: Tyr596 and Tyr602. In terms of domain architecture, Protein kinase spans 621 to 882 (IKIEKVIGVG…QIVNMLDKLI (262 aa)). ATP is bound by residues 627–635 (IGVGEFGEV) and Lys653. Asp746 (proton acceptor) is an active-site residue. Tyr779 and Tyr928 each carry phosphotyrosine; by autocatalysis. In terms of domain architecture, SAM spans 911 to 975 (SAVVSVSDWL…LSSVQAMRSQ (65 aa)). A PDZ-binding motif is present at residues 984 to 986 (VPV).

The protein belongs to the protein kinase superfamily. Tyr protein kinase family. Ephrin receptor subfamily. Interacts with the src family kinase, p59-Fyn, through the major phosphorylation site at position Tyr-602. Interacts (via PDZ motif) with SIPA1L1 (via PDZ domain); controls neuronal morphology through regulation of the RAP1 (RAP1A or RAP1B) and RAP2 (RAP2A, RAP2B or RAP2C) GTPases. Expressed at high levels in brain, with expression also detected in the kidney, lung, muscle and thymus.

The protein localises to the cell membrane. Its subcellular location is the early endosome. It catalyses the reaction L-tyrosyl-[protein] + ATP = O-phospho-L-tyrosyl-[protein] + ADP + H(+). Receptor tyrosine kinase which binds membrane-bound ephrin family ligands residing on adjacent cells, leading to contact-dependent bidirectional signaling into neighboring cells. The signaling pathway downstream of the receptor is referred to as forward signaling while the signaling pathway downstream of the ephrin ligand is referred to as reverse signaling. Highly promiscuous, it has the unique property among Eph receptors to bind and to be physiologically activated by both GPI-anchored ephrin-A and transmembrane ephrin-B ligands including EFNA1 and EFNB3. Upon activation by ephrin ligands, modulates cell morphology and integrin-dependent cell adhesion through regulation of the Rac, Rap and Rho GTPases activity. Plays an important role in the development of the nervous system controlling different steps of axonal guidance including the establishment of the corticospinal projections. The polypeptide is Ephrin type-A receptor 4 (EPHA4) (Gallus gallus (Chicken)).